A 1175-amino-acid polypeptide reads, in one-letter code: Pyruvate carboxylase (1175 aa).

The Biotin carboxylation domain maps to 22–474; it reads NANKILVANR…WTTFIDDTPS (453 aa). Residues Lys-140, Glu-224, and His-259 each contribute to the ATP site. One can recognise an ATP-grasp domain in the interval 144 to 341; sequence RNLAGKCNVP…IVAAQIQIAA (198 aa). Arg-316 is an active-site residue. A Pyruvate carboxyltransferase domain is found at 561-828; it reads CLIMDTTWRD…NTGITEQNAR (268 aa). Substrate-binding positions include 569 to 573 and Arg-642; that span reads RDAHQ. An a divalent metal cation-binding site is contributed by Asp-570. Lys-738, His-768, and His-770 together coordinate a divalent metal cation. Lys-738 carries the N6-carboxylysine modification. Substrate is bound at residue Thr-902. The region spanning 1099–1174 is the Biotinyl-binding domain; that stretch reads KADAHNPNEV…DAGDLICKIT (76 aa). Lys-1140 carries the N6-biotinyllysine modification.

Biotin is required as a cofactor. It depends on Zn(2+) as a cofactor.

The protein resides in the cytoplasm. It catalyses the reaction hydrogencarbonate + pyruvate + ATP = oxaloacetate + ADP + phosphate + H(+). The protein operates within carbohydrate biosynthesis; gluconeogenesis. Functionally, pyruvate carboxylase catalyzes a 2-step reaction, involving the ATP-dependent carboxylation of the covalently attached biotin in the first step and the transfer of the carboxyl group to pyruvate in the second. This is Pyruvate carboxylase (PYC) from Pichia angusta (Yeast).